The chain runs to 143 residues: Hemoglobin subunit alpha-2 (143 aa).

An N-acetylserine modification is found at serine 2. A Globin domain is found at 2–143 (SLTEKDKAAV…LSLALAEKYR (142 aa)). Residue histidine 60 participates in O2 binding. Histidine 89 contacts heme b.

It belongs to the globin family. As to quaternary structure, hb2 is a heterotetramer of two alpha-2 chains and two beta-1 chains; Hb3 is a heterotetramer of two alpha-2 chains and two beta-2 chains. Red blood cells.

Functionally, involved in oxygen transport from gills to the various peripheral tissues. The protein is Hemoglobin subunit alpha-2 (hba2) of Anarhichas minor (Arctic spotted wolffish).